The sequence spans 76 residues: COMM domain-containing protein 6 (76 aa).

The COMM domain occupies 9–76; that stretch reads KLVDFQWKLG…KDMSNMIETL (68 aa).

This sequence belongs to the COMM domain-containing protein 6 family. Component of the commander complex consisting of the CCC subcomplex and the retriever subcomplex. Component of the CCC subcomplex.

Functionally, scaffold protein in the commander complex that is essential for endosomal recycling of transmembrane cargos; the commander complex is composed of the CCC subcomplex and the retriever subcomplex. The polypeptide is COMM domain-containing protein 6 (commd6) (Dictyostelium discoideum (Social amoeba)).